The chain runs to 98 residues: Large ribosomal subunit protein uL23 (98 aa).

Belongs to the universal ribosomal protein uL23 family. As to quaternary structure, part of the 50S ribosomal subunit. Contacts protein L29, and trigger factor when it is bound to the ribosome.

One of the early assembly proteins it binds 23S rRNA. One of the proteins that surrounds the polypeptide exit tunnel on the outside of the ribosome. Forms the main docking site for trigger factor binding to the ribosome. The polypeptide is Large ribosomal subunit protein uL23 (Rickettsia typhi (strain ATCC VR-144 / Wilmington)).